The primary structure comprises 106 residues: Large ribosomal subunit protein eL42A (106 aa).

An N6-methyllysine; by RKM3 modification is found at Lys-40. Lys-55 bears the N6-methyllysine; by RKM4 mark.

The protein belongs to the eukaryotic ribosomal protein eL42 family. Component of the large ribosomal subunit (LSU). Mature yeast ribosomes consist of a small (40S) and a large (60S) subunit. The 40S small subunit contains 1 molecule of ribosomal RNA (18S rRNA) and 33 different proteins (encoded by 57 genes). The large 60S subunit contains 3 rRNA molecules (25S, 5.8S and 5S rRNA) and 46 different proteins (encoded by 81 genes). In wild-type cells, 78% of L42 is monomethylated at both Lys-40 and Lys-55, and 22% are a mixture of species with either residue monomethylated.

The protein localises to the cytoplasm. Its function is as follows. Component of the ribosome, a large ribonucleoprotein complex responsible for the synthesis of proteins in the cell. The small ribosomal subunit (SSU) binds messenger RNAs (mRNAs) and translates the encoded message by selecting cognate aminoacyl-transfer RNA (tRNA) molecules. The large subunit (LSU) contains the ribosomal catalytic site termed the peptidyl transferase center (PTC), which catalyzes the formation of peptide bonds, thereby polymerizing the amino acids delivered by tRNAs into a polypeptide chain. The nascent polypeptides leave the ribosome through a tunnel in the LSU and interact with protein factors that function in enzymatic processing, targeting, and the membrane insertion of nascent chains at the exit of the ribosomal tunnel. The sequence is that of Large ribosomal subunit protein eL42A from Saccharomyces cerevisiae (strain ATCC 204508 / S288c) (Baker's yeast).